We begin with the raw amino-acid sequence, 62 residues long: Photosystem II reaction center protein Z (62 aa).

2 helical membrane-spanning segments follow: residues 8-28 (ALAA…FAYA) and 41-61 (WVGS…NFFV).

This sequence belongs to the PsbZ family. As to quaternary structure, PSII is composed of 1 copy each of membrane proteins PsbA, PsbB, PsbC, PsbD, PsbE, PsbF, PsbH, PsbI, PsbJ, PsbK, PsbL, PsbM, PsbT, PsbX, PsbY, PsbZ, Psb30/Ycf12, peripheral proteins PsbO, CyanoQ (PsbQ), PsbU, PsbV and a large number of cofactors. It forms dimeric complexes.

Its subcellular location is the cellular thylakoid membrane. In terms of biological role, may control the interaction of photosystem II (PSII) cores with the light-harvesting antenna, regulates electron flow through the 2 photosystem reaction centers. PSII is a light-driven water plastoquinone oxidoreductase, using light energy to abstract electrons from H(2)O, generating a proton gradient subsequently used for ATP formation. The chain is Photosystem II reaction center protein Z from Gloeothece citriformis (strain PCC 7424) (Cyanothece sp. (strain PCC 7424)).